Consider the following 112-residue polypeptide: Secretoglobin family 2B member 24 (112 aa).

A signal peptide spans 1-23 (MKGTLLLLALLMIGELGFHTTEA).

This sequence belongs to the secretoglobin family. Expressed in lacrimal gland, at higher level in males than females.

It localises to the secreted. The polypeptide is Secretoglobin family 2B member 24 (Scgb2b24) (Mus musculus (Mouse)).